Here is a 272-residue protein sequence, read N- to C-terminus: Small ribosomal subunit protein uS2 (272 aa).

Residues Glu-244 to Glu-272 form a disordered region.

The protein belongs to the universal ribosomal protein uS2 family.

The polypeptide is Small ribosomal subunit protein uS2 (Trichodesmium erythraeum (strain IMS101)).